A 566-amino-acid polypeptide reads, in one-letter code: Interleukin-1 receptor-like 1 (566 aa).

The signal sequence occupies residues 1–26 (MIGKWRMGLWALAILTVPMYFIVTEG). Ig-like C2-type domains lie at 27 to 109 (RKTS…LNVT), 120 to 207 (PDYM…RSFT), and 217 to 323 (PVIT…VRLR). Residues 27–331 (RKTSWGLENE…LRRKQPIDHQ (305 aa)) lie on the Extracellular side of the membrane. A disulfide bridge connects residues C42 and C93. 3 N-linked (GlcNAc...) asparagine glycosylation sites follow: N107, N146, and N194. Disulfide bonds link C117/C157 and C139/C187. A flexible linker region spans residues 204 to 216 (RSFTVEEKGFSTF). N-linked (GlcNAc...) asparagine glycosylation is found at N225, N258, and N277. Intrachain disulfides connect C240–C307 and C243–C286. Residue K325 forms a Glycyl lysine isopeptide (Lys-Gly) (interchain with G-Cter in ubiquitin) linkage. A helical membrane pass occupies residues 332–354 (STYYIVAGCSLLLMFINVLVIVL). Over 355-566 (KVFWIEVALF…GKVCLDLKHF (212 aa)) the chain is Cytoplasmic. Positions 379–539 (KLYDAYIIYP…KFWKHVRYQM (161 aa)) constitute a TIR domain. S441 carries the post-translational modification Phosphoserine. The active site involves E465.

It belongs to the interleukin-1 receptor family. As to quaternary structure, interacts with MYD88, IRAK1, IRAK4, and TRAF6. Bound to its ligand IL-33, interacts with IL1RAP to form the minimal interleukin-33 signaling complex with a 1:1:1 stoichiometry. Interacts with KIT (bound to KITLG/SCF). A mast cell-specific KITLG/SCF-induced interleukin-33 signaling complex contains IL1RL1, IL1RAP, KIT and MYD88. Interacts with TMED1. Post-translationally, phosphorylated by GSK3B at Ser-441; leading to proteasomal degradation. Ubiquitinated at Lys-325 in a FBXL19-mediated manner; leading to proteasomal degradation. Ubiquitination by TRAF6 via 'Lys-27'-linked polyubiquitination and deubiquitination by USP38 serves as a critical regulatory mechanism for fine-tuning IL1RL1-mediated inflammatory response. Isoform A is detected in spleen, lung, bone marrow and lymh node. Isoform B is predominant in fibroblasts.

It is found in the cell membrane. The protein localises to the secreted. It catalyses the reaction NAD(+) + H2O = ADP-D-ribose + nicotinamide + H(+). Functionally, receptor for interleukin-33 (IL-33) which plays crucial roles in innate and adaptive immunity, contributing to tissue homeostasis and responses to environmental stresses together with coreceptor IL1RAP. Its stimulation recruits MYD88, IRAK1, IRAK4, and TRAF6, followed by phosphorylation of MAPK3/ERK1 and/or MAPK1/ERK2, MAPK14, and MAPK8. Possibly involved in helper T-cell function. Upon tissue injury, induces UCP2-dependent mitochondrial rewiring that attenuates the generation of reactive oxygen species and preserves the integrity of Krebs cycle required for persistent production of itaconate and subsequent GATA3-dependent differentiation of inflammation-resolving alternatively activated macrophages. Inhibits IL-33 signaling. In Rattus norvegicus (Rat), this protein is Interleukin-1 receptor-like 1 (Il1rl1).